A 568-amino-acid chain; its full sequence is CDK5 and ABL1 enzyme substrate 1 (568 aa).

Residues 1 to 31 are compositionally biased toward low complexity; the sequence is MAAATATAGTAACSSSSSSRGGSTDAAATSG. 2 disordered regions span residues 1–94 and 130–169; these read MAAA…PGAR and PSLV…QEEL. The tract at residues 1–98 is interaction with TDRD7; the sequence is MAAATATAGT…TKPGARARLS (98 aa). Over residues 33-45 the composition is skewed to pro residues; the sequence is QPPPPPPATAPPE. Basic and acidic residues predominate over residues 46 to 56; that stretch reads PLRKPRMDPRR. The tract at residues 140–427 is interaction with CDK3; it reads PSQPPRSAPA…TTVIDYVKPS (288 aa). Ser-248 is subject to Phosphoserine. Residue Ser-274 is modified to Phosphoserine; by CDK2 and CDK3. Phosphothreonine is present on Thr-350.

Belongs to the cyclin family. Found in a complex with p53/TP53. Found in a number of complexes with CDK2, CDK3, CDK5, ABL1, TDRD7, CDK17, CCNA1, CCNE1 and TP73. Interacts with CDK2, CDK3, CDK5, ABL1 and TDRD7. Phosphorylated on Ser-274 by CCNE1/CDK3. Phosphorylated on serine/threonine residues by CDK5 and on tyrosine residues by ABL1. Also phosphorylated in vitro by CCNA1/CDK2, CCNE1/CDK2, CCNA1/CDK3 and CCNE1/CDK3. In terms of tissue distribution, ubiquitous. Expressed in postnatal day 1 (P1), in postmitotic neurons of the subplate, cortex (V/VI) and marginal zone; in postnatal day 7 (P7), in all layers of the cerebral cortex and in the CA1 and CA2 regions of the hippocampus (at protein level). Highly expressed in brain, kidney, liver and lung.

Its subcellular location is the nucleus. The protein localises to the cytoplasm. It localises to the cell projection. The protein resides in the growth cone. Functionally, cyclin-dependent kinase binding protein. Enhances cyclin-dependent kinase tyrosine phosphorylation by nonreceptor tyrosine kinases, such as that of CDK5 by activated ABL1, which leads to increased CDK5 activity and is critical for neuronal development, and that of CDK2 by WEE1, which leads to decreased CDK2 activity and growth inhibition. Positively affects neuronal outgrowth. Plays a role as a regulator for p53/p73-induced cell death. The chain is CDK5 and ABL1 enzyme substrate 1 (Cables1) from Mus musculus (Mouse).